The sequence spans 66 residues: Neurotoxin Cex11 (66 aa).

The region spanning 1-64 is the LCN-type CS-alpha/beta domain; sequence KEGYPVNIYT…SYPYPEKSCG (64 aa). 4 cysteine pairs are disulfide-bonded: C12/C63, C16/C39, C25/C44, and C29/C46. Cysteine amide is present on C63. Positions 64–66 are excised as a propeptide; the sequence is GRK.

The protein belongs to the long (4 C-C) scorpion toxin superfamily. Sodium channel inhibitor family. Beta subfamily. In terms of tissue distribution, expressed by the venom gland.

It is found in the secreted. Functionally, beta toxins bind voltage-independently at site-4 of sodium channels (Nav) and shift the voltage of activation toward more negative potentials thereby affecting sodium channel activation and promoting spontaneous and repetitive firing. The protein is Neurotoxin Cex11 of Centruroides exilicauda (Bark scorpion).